A 223-amino-acid polypeptide reads, in one-letter code: Ribonuclease HII (223 aa).

Positions 32–223 (FHIAGVDEVG…LKGRFRDNMS (192 aa)) constitute an RNase H type-2 domain. Residues D38, E39, and D130 each coordinate a divalent metal cation.

This sequence belongs to the RNase HII family. The cofactor is Mn(2+). Mg(2+) serves as cofactor.

The protein resides in the cytoplasm. It catalyses the reaction Endonucleolytic cleavage to 5'-phosphomonoester.. In terms of biological role, endonuclease that specifically degrades the RNA of RNA-DNA hybrids. This Bartonella quintana (strain Toulouse) (Rochalimaea quintana) protein is Ribonuclease HII.